Reading from the N-terminus, the 233-residue chain is Phosphoribosylaminoimidazole-succinocarboxamide synthase (233 aa).

This sequence belongs to the SAICAR synthetase family.

The catalysed reaction is 5-amino-1-(5-phospho-D-ribosyl)imidazole-4-carboxylate + L-aspartate + ATP = (2S)-2-[5-amino-1-(5-phospho-beta-D-ribosyl)imidazole-4-carboxamido]succinate + ADP + phosphate + 2 H(+). It functions in the pathway purine metabolism; IMP biosynthesis via de novo pathway; 5-amino-1-(5-phospho-D-ribosyl)imidazole-4-carboxamide from 5-amino-1-(5-phospho-D-ribosyl)imidazole-4-carboxylate: step 1/2. The polypeptide is Phosphoribosylaminoimidazole-succinocarboxamide synthase (Staphylococcus saprophyticus subsp. saprophyticus (strain ATCC 15305 / DSM 20229 / NCIMB 8711 / NCTC 7292 / S-41)).